The following is a 133-amino-acid chain: Small ribosomal subunit protein uS9 (133 aa).

Positions 114–133 (VERKKYGKKKARRSPQFSKR) are disordered. Residues 118-133 (KYGKKKARRSPQFSKR) show a composition bias toward basic residues.

The protein belongs to the universal ribosomal protein uS9 family.

In Fusobacterium nucleatum subsp. nucleatum (strain ATCC 25586 / DSM 15643 / BCRC 10681 / CIP 101130 / JCM 8532 / KCTC 2640 / LMG 13131 / VPI 4355), this protein is Small ribosomal subunit protein uS9.